Reading from the N-terminus, the 751-residue chain is Protein WEAK CHLOROPLAST MOVEMENT UNDER BLUE LIGHT-like 3 (751 aa).

Serine 113 carries the phosphoserine modification. 2 coiled-coil regions span residues 165-558 and 588-647; these read ERRK…ALQE and QALE…KARD. Basic and acidic residues-rich tracts occupy residues 455–467 and 625–689; these read RERQ…KQKE and NREM…RNKE. 2 disordered regions span residues 455 to 479 and 625 to 751; these read RERQ…DKDA and NREM…HSHK. Positions 704-723 are enriched in low complexity; it reads GSSSNNTGGSTTTNNNNLTP.

Belongs to the WEB family.

In Arabidopsis thaliana (Mouse-ear cress), this protein is Protein WEAK CHLOROPLAST MOVEMENT UNDER BLUE LIGHT-like 3 (WEL3).